A 418-amino-acid chain; its full sequence is Actin-like protein C08B11.6 (418 aa).

Belongs to the actin family. ARP6 subfamily.

The protein localises to the cytoplasm. The protein resides in the cytoskeleton. The protein is Actin-like protein C08B11.6 (arp-6) of Caenorhabditis elegans.